The chain runs to 262 residues: 26 kDa secreted antigen (262 aa).

Residues 1–21 (MSVVHKACLIALLFVSSGVAQ) form the signal peptide. 2 ShKT domains span residues 23 to 57 (CMDS…CNTC) and 59 to 93 (CRDE…CGLC). 6 cysteine pairs are disulfide-bonded: C23–C57, C30–C50, C37–C54, C59–C93, C66–C86, and C73–C90.

The protein belongs to the phosphatidylethanolamine-binding protein family.

It is found in the secreted. Functionally, binds phosphatidylethanolamine. The protein is 26 kDa secreted antigen (TES-26) of Toxocara canis (Canine roundworm).